Consider the following 53-residue polypeptide: uncharacterized protein (53 aa).

Residues 24–44 form a helical membrane-spanning segment; that stretch reads LMTFIAVNAVLSLILIRAVIL.

It localises to the membrane. This is an uncharacterized protein from Methanocaldococcus jannaschii (strain ATCC 43067 / DSM 2661 / JAL-1 / JCM 10045 / NBRC 100440) (Methanococcus jannaschii).